Here is a 176-residue protein sequence, read N- to C-terminus: NAD(P)H-quinone oxidoreductase subunit 6, chloroplastic (176 aa).

5 helical membrane-spanning segments follow: residues Phe-10–Thr-30, Pro-32–Leu-52, Ala-61–Met-81, Val-95–Ile-115, and Phe-152–Ala-172.

This sequence belongs to the complex I subunit 6 family. NDH is composed of at least 16 different subunits, 5 of which are encoded in the nucleus.

It is found in the plastid. Its subcellular location is the chloroplast thylakoid membrane. It carries out the reaction a plastoquinone + NADH + (n+1) H(+)(in) = a plastoquinol + NAD(+) + n H(+)(out). The catalysed reaction is a plastoquinone + NADPH + (n+1) H(+)(in) = a plastoquinol + NADP(+) + n H(+)(out). Functionally, NDH shuttles electrons from NAD(P)H:plastoquinone, via FMN and iron-sulfur (Fe-S) centers, to quinones in the photosynthetic chain and possibly in a chloroplast respiratory chain. The immediate electron acceptor for the enzyme in this species is believed to be plastoquinone. Couples the redox reaction to proton translocation, and thus conserves the redox energy in a proton gradient. This chain is NAD(P)H-quinone oxidoreductase subunit 6, chloroplastic (ndhG), found in Populus alba (White poplar).